The chain runs to 439 residues: Adenylosuccinate synthetase (439 aa).

Residues 25 to 31 (GDEGKGK), 53 to 55 (GHT), and Lys-62 contribute to the GTP site. Residue Asp-26 is the Proton acceptor of the active site. Residues Asp-26 and Gly-53 each coordinate Mg(2+). Residues 26-29 (DEGK) and 51-54 (NAGH) each bind IMP. His-54 (proton donor) is an active-site residue. The IMP site is built by Thr-141, Arg-155, Asn-232, and Thr-247. Thr-307 contacts GTP. 307–313 (TTTKRPR) contacts substrate. Arg-311 lines the IMP pocket. Residues Arg-313, 339-341 (KLD), and 425-427 (GVG) contribute to the GTP site.

Belongs to the adenylosuccinate synthetase family. Homodimer. The cofactor is Mg(2+).

It localises to the cytoplasm. The catalysed reaction is IMP + L-aspartate + GTP = N(6)-(1,2-dicarboxyethyl)-AMP + GDP + phosphate + 2 H(+). It participates in purine metabolism; AMP biosynthesis via de novo pathway; AMP from IMP: step 1/2. Plays an important role in the salvage pathway for purine nucleotide biosynthesis. Catalyzes the first commited step in the biosynthesis of AMP from IMP. This Plasmodium berghei (strain Anka) protein is Adenylosuccinate synthetase (ADSS).